Here is a 1056-residue protein sequence, read N- to C-terminus: Sucrose-phosphate synthase (1056 aa).

Residues 112–123 show a composition bias toward basic and acidic residues; sequence HVERERGRREAT. The disordered stretch occupies residues 112 to 132; it reads HVERERGRREATADMSEDLSE. Phosphoserine occurs at positions 158 and 424. The tract at residues 681–700 is disordered; sequence NWQRIDEGSENSDTDSAGDS.

It belongs to the glycosyltransferase 1 family. As to quaternary structure, homodimer or homotetramer. Post-translationally, phosphorylated at Ser-158 and Ser-424.

The catalysed reaction is beta-D-fructose 6-phosphate + UDP-alpha-D-glucose = sucrose 6(F)-phosphate + UDP + H(+). Its pathway is glycan biosynthesis; sucrose biosynthesis; sucrose from D-fructose 6-phosphate and UDP-alpha-D-glucose: step 1/2. Its activity is regulated as follows. Activity is regulated by phosphorylation and moderated by concentration of metabolites and light. Plays a role in photosynthetic sucrose synthesis by catalyzing the rate-limiting step of sucrose biosynthesis from UDP-glucose and fructose- 6-phosphate. Involved in the regulation of carbon partitioning in the leaves of plants. May regulate the synthesis of sucrose and therefore play a major role as a limiting factor in the export of photoassimilates out of the leaf. Plays a role for sucrose availability that is essential for plant growth and fiber elongation. This is Sucrose-phosphate synthase (SPS1) from Spinacia oleracea (Spinach).